The following is a 240-amino-acid chain: Lactate utilization protein C (240 aa).

Belongs to the LutC/YkgG family.

Functionally, is involved in L-lactate degradation and allows cells to grow with lactate as the sole carbon source. This is Lactate utilization protein C from Bacillus pumilus (strain SAFR-032).